The sequence spans 506 residues: Voltage-gated potassium channel regulatory subunit KCNG4 (506 aa).

The Cytoplasmic portion of the chain corresponds to 1–216 (MPMSSRDRDL…EMVEDPQSGL (216 aa)). A helical membrane pass occupies residues 217–238 (PGKVFACLSVLFVATTAVSLCV). Topologically, residues 239 to 259 (STMPDFRAEEGKGECTRKCYY) are extracellular. A helical membrane pass occupies residues 260–281 (IFVVESICVAWFSLEFCLRFVQ). Topologically, residues 282–292 (APNKCQFFRGP) are cytoplasmic. A helical transmembrane segment spans residues 293–312 (LNVIDILAISPYYVSLAVSD). The Extracellular segment spans residues 313 to 326 (ESPEAGERPSSSSY). Residues 327-351 (LEKVGLVLRVLRALRILYVMRLARH) form a helical; Voltage-sensor membrane-spanning segment. Topologically, residues 352-366 (SLGLQTLGLTVRRCA) are cytoplasmic. Residues 367–388 (REFGLLMLFLAVAVTLFSPLVY) traverse the membrane as a helical segment. Residues 389 to 403 (VAENESGRVLEFTSI) lie on the Extracellular side of the membrane. Residues 404 to 415 (PASYWWAIISMT) constitute an intramembrane region (helical). Positions 416-421 (TVGYGD) match the Selectivity filter motif. Residues 416–423 (TVGYGDMV) lie within the membrane without spanning it. Topologically, residues 424–430 (PRSVPGQ) are extracellular. A helical transmembrane segment spans residues 431–459 (MVALSSILSGILIMAFPATSIFHTFSHSY). The Cytoplasmic segment spans residues 460–506 (LELKREQEQVQARLRRLQNTNSASERELLSDVDDLVPEGLTSPGRYM).

The protein belongs to the potassium channel family. G (TC 1.A.1.2) subfamily. Kv6.4/KCNG4 sub-subfamily. In terms of assembly, heterotetramer with KCNB1. Does not form homomultimer.

Its subcellular location is the cell membrane. Functionally, regulatory subunit of the voltage-gated potassium (Kv) channel which, when coassembled with KCNB1, modulates the kinetics parameters of the heterotetrameric channel namely the time course of activation, deactivation and inactivation and on the voltage-dependence of activation. Potassium channel subunit that does not form functional channels by itself. Reduces the deactivation rate. Modulates the threshold for activation by shifting by approximately 20 mV in hyperpolarizing direction. Markedly changes the inactivation by shifting the voltage dependence of inactivation by approximately 40 mV in hyperpolarizing direction. Acceleratee activation and enhances the time course of activation. The chain is Voltage-gated potassium channel regulatory subunit KCNG4 from Mus musculus (Mouse).